The sequence spans 668 residues: DNA ligase (668 aa).

Residues 32–36 (DSEYD), 81–82 (SL), and Glu110 each bind NAD(+). Residue Lys112 is the N6-AMP-lysine intermediate of the active site. NAD(+)-binding residues include Arg133, Glu167, Lys283, and Lys307. Residues Cys401, Cys404, Cys419, and Cys424 each contribute to the Zn(2+) site. Residues 586–668 (QTDSEFNGKT…IQKQKEVENK (83 aa)) form the BRCT domain.

This sequence belongs to the NAD-dependent DNA ligase family. LigA subfamily. Mg(2+) is required as a cofactor. The cofactor is Mn(2+).

The catalysed reaction is NAD(+) + (deoxyribonucleotide)n-3'-hydroxyl + 5'-phospho-(deoxyribonucleotide)m = (deoxyribonucleotide)n+m + AMP + beta-nicotinamide D-nucleotide.. Its function is as follows. DNA ligase that catalyzes the formation of phosphodiester linkages between 5'-phosphoryl and 3'-hydroxyl groups in double-stranded DNA using NAD as a coenzyme and as the energy source for the reaction. It is essential for DNA replication and repair of damaged DNA. In Staphylococcus carnosus (strain TM300), this protein is DNA ligase.